A 188-amino-acid chain; its full sequence is Elongation factor P (188 aa).

N6-(3,6-diaminohexanoyl)-5-hydroxylysine is present on K34.

It belongs to the elongation factor P family. May be beta-lysylated on the epsilon-amino group of Lys-34 by the combined action of EpmA and EpmB, and then hydroxylated on the C5 position of the same residue by EpmC (if this protein is present). Lysylation is critical for the stimulatory effect of EF-P on peptide-bond formation. The lysylation moiety may extend toward the peptidyltransferase center and stabilize the terminal 3-CCA end of the tRNA. Hydroxylation of the C5 position on Lys-34 may allow additional potential stabilizing hydrogen-bond interactions with the P-tRNA.

The protein resides in the cytoplasm. Its pathway is protein biosynthesis; polypeptide chain elongation. Involved in peptide bond synthesis. Alleviates ribosome stalling that occurs when 3 or more consecutive Pro residues or the sequence PPG is present in a protein, possibly by augmenting the peptidyl transferase activity of the ribosome. Modification of Lys-34 is required for alleviation. The sequence is that of Elongation factor P from Aliivibrio fischeri (strain ATCC 700601 / ES114) (Vibrio fischeri).